The chain runs to 124 residues: Small ribosomal subunit protein bS6 (124 aa).

It belongs to the bacterial ribosomal protein bS6 family.

Binds together with bS18 to 16S ribosomal RNA. The chain is Small ribosomal subunit protein bS6 from Bordetella avium (strain 197N).